Reading from the N-terminus, the 302-residue chain is Phosphoribosylaminoimidazole-succinocarboxamide synthase (302 aa).

Belongs to the SAICAR synthetase family.

It catalyses the reaction 5-amino-1-(5-phospho-D-ribosyl)imidazole-4-carboxylate + L-aspartate + ATP = (2S)-2-[5-amino-1-(5-phospho-beta-D-ribosyl)imidazole-4-carboxamido]succinate + ADP + phosphate + 2 H(+). The protein operates within purine metabolism; IMP biosynthesis via de novo pathway; 5-amino-1-(5-phospho-D-ribosyl)imidazole-4-carboxamide from 5-amino-1-(5-phospho-D-ribosyl)imidazole-4-carboxylate: step 1/2. This is Phosphoribosylaminoimidazole-succinocarboxamide synthase from Cupriavidus taiwanensis (strain DSM 17343 / BCRC 17206 / CCUG 44338 / CIP 107171 / LMG 19424 / R1) (Ralstonia taiwanensis (strain LMG 19424)).